We begin with the raw amino-acid sequence, 362 residues long: 3-isopropylmalate dehydrogenase (362 aa).

77–88 (GPKWGTGAVRPE) contacts NAD(+). Residues Arg95, Arg105, Arg134, and Asp223 each coordinate substrate. Positions 223, 248, and 252 each coordinate Mg(2+). NAD(+) is bound at residue 287–298 (GSAPDLPKGKVN).

This sequence belongs to the isocitrate and isopropylmalate dehydrogenases family. Homodimer. Mg(2+) serves as cofactor. Mn(2+) is required as a cofactor.

It localises to the cytoplasm. The catalysed reaction is (2R,3S)-3-isopropylmalate + NAD(+) = 4-methyl-2-oxopentanoate + CO2 + NADH. It functions in the pathway amino-acid biosynthesis; L-leucine biosynthesis; L-leucine from 3-methyl-2-oxobutanoate: step 3/4. Catalyzes the oxidation of 3-carboxy-2-hydroxy-4-methylpentanoate (3-isopropylmalate) to 3-carboxy-4-methyl-2-oxopentanoate. The product decarboxylates to 4-methyl-2 oxopentanoate. This Zygosaccharomyces bailii protein is 3-isopropylmalate dehydrogenase (LEU2).